The primary structure comprises 422 residues: Lipase member M (422 aa).

An N-terminal signal peptide occupies residues 1 to 33 (MSEILSRVWTVSHRVEIWLLILVAYLLQRNVNS). Asparagine 48 is a glycosylation site (N-linked (GlcNAc...) asparagine). The region spanning 92 to 392 (PVVLLQHGLL…EWAHVDFIWG (301 aa)) is the AB hydrolase-1 domain. The Nucleophile role is filled by serine 186. A disulfide bond links cysteine 260 and cysteine 269. Active-site charge relay system residues include aspartate 357 and histidine 386.

This sequence belongs to the AB hydrolase superfamily. Lipase family.

Its subcellular location is the secreted. Its function is as follows. Plays a highly specific role in the last step of keratinocyte differentiation. May have an essential function in lipid metabolism of the most differentiated epidermal layers. The protein is Lipase member M (Lipm) of Mus musculus (Mouse).